A 567-amino-acid polypeptide reads, in one-letter code: Proline--tRNA ligase (567 aa).

The protein belongs to the class-II aminoacyl-tRNA synthetase family. ProS type 1 subfamily. As to quaternary structure, homodimer.

The protein localises to the cytoplasm. The enzyme catalyses tRNA(Pro) + L-proline + ATP = L-prolyl-tRNA(Pro) + AMP + diphosphate. Functionally, catalyzes the attachment of proline to tRNA(Pro) in a two-step reaction: proline is first activated by ATP to form Pro-AMP and then transferred to the acceptor end of tRNA(Pro). As ProRS can inadvertently accommodate and process non-cognate amino acids such as alanine and cysteine, to avoid such errors it has two additional distinct editing activities against alanine. One activity is designated as 'pretransfer' editing and involves the tRNA(Pro)-independent hydrolysis of activated Ala-AMP. The other activity is designated 'posttransfer' editing and involves deacylation of mischarged Ala-tRNA(Pro). The misacylated Cys-tRNA(Pro) is not edited by ProRS. This Geobacillus thermodenitrificans (strain NG80-2) protein is Proline--tRNA ligase.